The chain runs to 295 residues: Transcriptional regulator SirC (295 aa).

In terms of domain architecture, HTH araC/xylS-type spans 195–292 (EKVYNIIISD…KITPLSFMRT (98 aa)). DNA-binding regions (H-T-H motif) lie at residues 212–233 (AEVA…AAEE) and 259–282 (ISQV…KRHF).

Positive regulator of the expression of the invasion-associated type III secretion system encoded within SPI-1 (pathogenicity island 1). This is Transcriptional regulator SirC (sirC) from Salmonella typhimurium (strain SL1344).